A 933-amino-acid polypeptide reads, in one-letter code: Progesterone receptor (933 aa).

Positions 1–157 (MTELKAKGPR…PEDPPAAPAT (157 aa)) are disordered. The AF3; mediates transcriptional activation (in isoform B) stretch occupies residues 1 to 164 (MTELKAKGPR…PATQRVLSPL (164 aa)). The modulating, Pro-Rich stretch occupies residues 1 to 566 (MTELKAKGPR…YSFESLPQKI (566 aa)). A Glycyl lysine isopeptide (Lys-Gly) (interchain with G-Cter in SUMO) cross-link involves residue Lys-7. Phosphoserine is present on Ser-20. Positions 55–59 (LDGLL) match the LXXL motif 1 motif. Phosphoserine occurs at positions 81 and 102. The short motif at 115–119 (LDTLL) is the LXXL motif 2 element. Phosphoserine is present on residues Ser-130 and Ser-162. Residues 165 to 305 (MSRSGCKVGD…LATTVMDFIH (141 aa)) are mediates transcriptional transrepression (in isoform A). Positions 183-187 (KVLPR) match the Nuclear localization signal motif. Residues Ser-190 and Ser-213 each carry the phosphoserine modification. Positions 195–241 (LLLPASESPHWSGAPVKPSPQAAAVEVEEEDGSESEESAGPLLKGKP) are disordered. A compositionally biased stretch (acidic residues) spans 220-231 (EVEEEDGSESEE). Over residues 232-241 (SAGPLLKGKP) the composition is skewed to low complexity. Phosphoserine; by MAPK1 is present on Ser-294. Residues 331–351 (GGAGAASAFAPPRSSPCASST) form a disordered region. Over residues 335 to 350 (AASAFAPPRSSPCASS) the composition is skewed to low complexity. A Phosphoserine; by MAPK modification is found at Ser-345. A Glycyl lysine isopeptide (Lys-Gly) (interchain with G-Cter in SUMO); alternate cross-link involves residue Lys-388. Residue Lys-388 forms a Glycyl lysine isopeptide (Lys-Gly) (interchain with G-Cter in ubiquitin); alternate linkage. A Phosphoserine; by CDK2 modification is found at Ser-400. The interval 415 to 452 (PDFPLGPPPPLPPRATPSRPGEAAVTAAPASASVSSAS) is disordered. The segment covering 418-429 (PLGPPPPLPPRA) has biased composition (pro residues). Positions 430-452 (TPSRPGEAAVTAAPASASVSSAS) are enriched in low complexity. Positions 456 to 546 (STLECILYKA…VYPPYLNYLR (91 aa)) are AF1; mediates transcriptional activation. A Glycyl lysine isopeptide (Lys-Gly) (interchain with G-Cter in SUMO) cross-link involves residue Lys-531. 2 NR C4-type zinc fingers span residues 567–587 (CLIC…CGSC) and 603–627 (CAGR…LRKC). Residues 567–639 (CLICGDEASG…AGMVLGGRKF (73 aa)) constitute a DNA-binding region (nuclear receptor). Ser-676 carries the post-translational modification Phosphoserine. The NR LBD domain occupies 679–913 (QDIQLIPPLI…EFPEMMSEVI (235 aa)). Residues 687–933 (LINLLMSIEP…MVKPLLFHKK (247 aa)) are AF2; mediates transcriptional activation. Arg-766 is a binding site for progesterone.

The protein belongs to the nuclear hormone receptor family. NR3 subfamily. Interacts with SMARD1 and UNC45A. Interacts with CUEDC2; the interaction promotes ubiquitination, decreases sumoylation, and represses transcriptional activity. Interacts with PIAS3; the interaction promotes sumoylation of PR in a hormone-dependent manner, inhibits DNA-binding, and alters nuclear export. Interacts with SP1; the interaction requires ligand-induced phosphorylation on Ser-345 by ERK1/2 MAPK. Interacts with PRMT2. Isoform A interacts with NCOR2. Isoform B (but not isoform A) interacts with NCOA2 and NCOA1. Isoform B (but not isoform A) interacts with KLF9. Interacts with GTF2B. Phosphorylated on multiple serine sites. Several of these sites are hormone-dependent. Phosphorylation on Ser-294 occurs preferentially on isoform B, is highly hormone-dependent and modulates ubiquitination and sumoylation on Lys-388. Phosphorylation on Ser-102 and Ser-345 also requires induction by hormone. Basal phosphorylation on Ser-81, Ser-162, Ser-190 and Ser-400 is increased in response to progesterone and can be phosphorylated in vitro by the CDK2-A1 complex. Increased levels of phosphorylation on Ser-400 also in the presence of EGF, heregulin, IGF, PMA and FBS. Phosphorylation at this site by CDK2 is ligand-independent, and increases nuclear translocation and transcriptional activity. Phosphorylation at Ser-162 and Ser-294, but not at Ser-190, is impaired during the G(2)/M phase of the cell cycle. Phosphorylation on Ser-345 by ERK1/2 MAPK is required for interaction with SP1. Post-translationally, sumoylation is hormone-dependent and represses transcriptional activity. Sumoylation on all three sites is enhanced by PIAS3. Desumoylated by SENP1. Sumoylation on Lys-388, the main site of sumoylation, is repressed by ubiquitination on the same site, and modulated by phosphorylation at Ser-294. In terms of processing, ubiquitination is hormone-dependent and represses sumoylation on the same site. Promoted by MAPK-mediated phosphorylation on Ser-294. Ubiquitinated by UBR5, leading to its degradation: UBR5 specifically recognizes and binds ligand-bound PGR when it is not associated with coactivators (NCOAs). In presence of NCOAs, the UBR5-degron is not accessible, preventing its ubiquitination and degradation. Palmitoylated by ZDHHC7 and ZDHHC21. Palmitoylation is required for plasma membrane targeting and for rapid intracellular signaling via ERK and AKT kinases and cAMP generation. In reproductive tissues the expression of isoform A and isoform B varies as a consequence of developmental and hormonal status. Isoform A and isoform B are expressed in comparable levels in uterine glandular epithelium during the proliferative phase of the menstrual cycle. Expression of isoform B but not of isoform A persists in the glands during mid-secretory phase. In the stroma, isoform A is the predominant form throughout the cycle. Heterogeneous isoform expression between the glands of the endometrium basalis and functionalis is implying region-specific responses to hormonal stimuli.

The protein localises to the nucleus. It is found in the cytoplasm. The protein resides in the mitochondrion outer membrane. The steroid hormones and their receptors are involved in the regulation of eukaryotic gene expression and affect cellular proliferation and differentiation in target tissues. Depending on the isoform, progesterone receptor functions as a transcriptional activator or repressor. In terms of biological role, ligand-dependent transdominant repressor of steroid hormone receptor transcriptional activity including repression of its isoform B, MR and ER. Transrepressional activity may involve recruitment of corepressor NCOR2. Functionally, transcriptional activator of several progesteron-dependent promoters in a variety of cell types. Involved in activation of SRC-dependent MAPK signaling on hormone stimulation. Its function is as follows. Increases mitochondrial membrane potential and cellular respiration upon stimulation by progesterone. The sequence is that of Progesterone receptor (PGR) from Homo sapiens (Human).